The chain runs to 265 residues: MICOS complex subunit Mic27 (265 aa).

Residues 1–27 (MAAFRMGKLTTIPAGLIYASINVRLAK) constitute a mitochondrion transit peptide. The Mitochondrial intermembrane portion of the chain corresponds to 28 to 110 (EEEPKKQLVR…YVYLKNPPQD (83 aa)). The helical transmembrane segment at 111 to 129 (FLPKMGVITASGLAGLLSA) threads the bilayer. Over 130–137 (RKGSRFKK) the chain is Mitochondrial matrix. A helical membrane pass occupies residues 138-155 (IAYPLGLATLGATVCYPA). At 156 to 265 (QSVIIAKITG…DDKDMYSTRS (110 aa)) the chain is on the mitochondrial intermembrane side. Disordered stretches follow at residues 187–215 (SENESLPEPKEESKEGRSDEIHASLPDLK) and 229–265 (VIKSESTSGTTQFIPDPKLMDHGQSHPDDKDMYSTRS). At Ser204 the chain carries Phosphoserine. The segment covering 229-241 (VIKSESTSGTTQF) has biased composition (polar residues). The span at 246 to 265 (KLMDHGQSHPDDKDMYSTRS) shows a compositional bias: basic and acidic residues.

It belongs to the apolipoprotein O/MICOS complex subunit Mic27 family. In terms of assembly, component of the mitochondrial contact site and cristae organizing system (MICOS) complex, composed of at least MICOS10/MIC10, CHCHD3/MIC19, CHCHD6/MIC25, APOOL/MIC27, IMMT/MIC60, APOO/MIC23/MIC26 and MICOS13/MIC13. This complex was also known under the names MINOS or MitOS complex. The MICOS complex associates with mitochondrial outer membrane proteins SAMM50, MTX1 and MTX2 (together described as components of the mitochondrial outer membrane sorting assembly machinery (SAM) complex) and DNAJC11, mitochondrial inner membrane protein TMEM11 and with HSPA9. The MICOS and SAM complexes together with DNAJC11 are part of a large protein complex spanning both membranes termed the mitochondrial intermembrane space bridging (MIB) complex. Interacts with MICOS10/MIC10, IMMT/MIC60 and APOO/MIC23/MIC26.

It localises to the mitochondrion inner membrane. The protein localises to the mitochondrion. Component of the MICOS complex, a large protein complex of the mitochondrial inner membrane that plays crucial roles in the maintenance of crista junctions, inner membrane architecture, and formation of contact sites to the outer membrane. Specifically binds to cardiolipin (in vitro) but not to the precursor lipid phosphatidylglycerol. Plays a crucial role in crista junction formation and mitochondrial function. The chain is MICOS complex subunit Mic27 (Apool) from Mus musculus (Mouse).